A 142-amino-acid polypeptide reads, in one-letter code: uncharacterized protein (142 aa).

This is an uncharacterized protein from Mycobacterium tuberculosis (strain CDC 1551 / Oshkosh).